Reading from the N-terminus, the 348-residue chain is Neuronal growth regulator 1 (348 aa).

The first 31 residues, 1–31 (MVLLAQGACCSNQWLAAVLLSLCSCLPAGQS), serve as a signal peptide directing secretion. Ig-like C2-type domains are found at residues 32-128 (VDFP…VHLT), 133-215 (PKIY…RVIV), and 219-307 (PTIQ…LPLN). A disulfide bond links cysteine 54 and cysteine 112. N-linked (GlcNAc...) asparagine glycosylation is found at asparagine 67 and asparagine 149. 2 disulfides stabilise this stretch: cysteine 154–cysteine 197 and cysteine 239–cysteine 291. A Phosphotyrosine modification is found at tyrosine 181. Residues asparagine 269, asparagine 280, asparagine 288, and asparagine 301 are each glycosylated (N-linked (GlcNAc...) asparagine). A lipid anchor (GPI-anchor amidated glycine) is attached at glycine 318. Residues 319–348 (SACDLFSCWSLALTLSSVISIFYLKNAILQ) constitute a propeptide, removed in mature form.

Belongs to the immunoglobulin superfamily. IgLON family. As to expression, expressed in brain.

It localises to the cell membrane. Functionally, may be involved in cell-adhesion. May function as a trans-neural growth-promoting factor in regenerative axon sprouting in the mammalian brain. This chain is Neuronal growth regulator 1 (Negr1), found in Mus musculus (Mouse).